The primary structure comprises 156 residues: Ribosome maturation factor RimP (156 aa).

The protein belongs to the RimP family.

It is found in the cytoplasm. Required for maturation of 30S ribosomal subunits. This is Ribosome maturation factor RimP from Synechococcus sp. (strain JA-2-3B'a(2-13)) (Cyanobacteria bacterium Yellowstone B-Prime).